The following is a 529-amino-acid chain: Peptide chain release factor 3 (529 aa).

In terms of domain architecture, tr-type G spans 11-280 (AKRRTFAIIS…GLVEWAPAPM (270 aa)). GTP-binding positions include 20–27 (SHPDAGKT), 88–92 (DTPGH), and 142–145 (NKLD).

It belongs to the TRAFAC class translation factor GTPase superfamily. Classic translation factor GTPase family. PrfC subfamily.

The protein resides in the cytoplasm. Functionally, increases the formation of ribosomal termination complexes and stimulates activities of RF-1 and RF-2. It binds guanine nucleotides and has strong preference for UGA stop codons. It may interact directly with the ribosome. The stimulation of RF-1 and RF-2 is significantly reduced by GTP and GDP, but not by GMP. The protein is Peptide chain release factor 3 of Klebsiella pneumoniae subsp. pneumoniae (strain ATCC 700721 / MGH 78578).